Consider the following 147-residue polypeptide: Arginine repressor (147 aa).

The protein belongs to the ArgR family.

It is found in the cytoplasm. It functions in the pathway amino-acid biosynthesis; L-arginine biosynthesis [regulation]. Regulates arginine biosynthesis genes. This Chlamydia felis (strain Fe/C-56) (Chlamydophila felis) protein is Arginine repressor.